Consider the following 422-residue polypeptide: Serine hydroxymethyltransferase (422 aa).

(6S)-5,6,7,8-tetrahydrofolate contacts are provided by residues Leu-118 and 122 to 124 (GHL). At Lys-227 the chain carries N6-(pyridoxal phosphate)lysine. (6S)-5,6,7,8-tetrahydrofolate contacts are provided by residues Glu-243 and 351–353 (SPF).

Belongs to the SHMT family. Homodimer. Pyridoxal 5'-phosphate serves as cofactor.

The protein localises to the cytoplasm. It catalyses the reaction (6R)-5,10-methylene-5,6,7,8-tetrahydrofolate + glycine + H2O = (6S)-5,6,7,8-tetrahydrofolate + L-serine. Its pathway is one-carbon metabolism; tetrahydrofolate interconversion. It functions in the pathway amino-acid biosynthesis; glycine biosynthesis; glycine from L-serine: step 1/1. Its function is as follows. Catalyzes the reversible interconversion of serine and glycine with tetrahydrofolate (THF) serving as the one-carbon carrier. This reaction serves as the major source of one-carbon groups required for the biosynthesis of purines, thymidylate, methionine, and other important biomolecules. Also exhibits THF-independent aldolase activity toward beta-hydroxyamino acids, producing glycine and aldehydes, via a retro-aldol mechanism. This Kosmotoga olearia (strain ATCC BAA-1733 / DSM 21960 / TBF 19.5.1) protein is Serine hydroxymethyltransferase.